We begin with the raw amino-acid sequence, 153 residues long: Aspartate carbamoyltransferase regulatory chain (153 aa).

Residues cysteine 109, cysteine 114, cysteine 135, and cysteine 138 each contribute to the Zn(2+) site.

Belongs to the PyrI family. Contains catalytic and regulatory chains. Zn(2+) serves as cofactor.

In terms of biological role, involved in allosteric regulation of aspartate carbamoyltransferase. This Natronomonas pharaonis (strain ATCC 35678 / DSM 2160 / CIP 103997 / JCM 8858 / NBRC 14720 / NCIMB 2260 / Gabara) (Halobacterium pharaonis) protein is Aspartate carbamoyltransferase regulatory chain.